The following is a 148-amino-acid chain: 3-hydroxyacyl-[acyl-carrier-protein] dehydratase FabZ (148 aa).

Residue histidine 50 is part of the active site.

This sequence belongs to the thioester dehydratase family. FabZ subfamily.

The protein resides in the cytoplasm. The enzyme catalyses a (3R)-hydroxyacyl-[ACP] = a (2E)-enoyl-[ACP] + H2O. Its function is as follows. Involved in unsaturated fatty acids biosynthesis. Catalyzes the dehydration of short chain beta-hydroxyacyl-ACPs and long chain saturated and unsaturated beta-hydroxyacyl-ACPs. This is 3-hydroxyacyl-[acyl-carrier-protein] dehydratase FabZ from Lactobacillus helveticus (strain DPC 4571).